Reading from the N-terminus, the 222-residue chain is Glutathione S-transferase alpha-2 (222 aa).

A GST N-terminal domain is found at Gly-3–Gly-83. The residue at position 4 (Lys-4) is an N6-succinyllysine. Glutathione contacts are provided by residues Tyr-9, Lys-45, Gln-54 to Val-55, and Gln-67 to Thr-68. In terms of domain architecture, GST C-terminal spans Asp-85–Met-208.

It belongs to the GST superfamily. Alpha family. In terms of assembly, homodimer or heterodimer of GSTA1 and GSTA2.

It is found in the cytoplasm. The catalysed reaction is RX + glutathione = an S-substituted glutathione + a halide anion + H(+). Functionally, catalyzes the conjugation of glutathione to a large variety of electrophilic compounds. In Rattus norvegicus (Rat), this protein is Glutathione S-transferase alpha-2 (Gsta2).